The sequence spans 906 residues: Ectonucleotide pyrophosphatase/phosphodiesterase family member 1 (906 aa).

The segment at 1-22 is disordered; it reads MERDGDQAGHGPRHGSAGNGRE. Residues 1-58 lie on the Cytoplasmic side of the membrane; sequence MERDGDQAGHGPRHGSAGNGRELESPAAASLLAPMDLGEEPLEKAERARPAKDPNTYK. The residue at position 25 (Ser-25) is a Phosphoserine. The Di-leucine motif signature appears at 27 to 34; sequence AAASLLAP. Residues 59–79 traverse the membrane as a helical; Signal-anchor for type II membrane protein segment; the sequence is VLSLVLSVCVLTTILGCIFGL. At 80 to 906 the chain is on the extracellular side; the sequence is KPSCAKEVKS…THLPIFSQED (827 aa). SMB domains lie at 86-126 and 127-171; these read EVKS…VEPT and HIWT…DKKS. Intrachain disulfides connect Cys-90–Cys-104, Cys-94–Cys-122, Cys-102–Cys-115, Cys-108–Cys-114, Cys-131–Cys-148, Cys-136–Cys-166, Cys-146–Cys-159, Cys-152–Cys-158, Cys-177–Cys-223, and Cys-185–Cys-397. Asn-161 is a glycosylation site (N-linked (GlcNAc...) asparagine). Residues 173-573 form a phosphodiesterase region; it reads VEETCESIDT…APNNGSHGSL (401 aa). AMP is bound by residues Asp-200, Thr-238, and Asn-259. Positions 200 and 238 each coordinate Zn(2+). Thr-238 (AMP-threonine intermediate) is an active-site residue. CMP is bound by residues Thr-238 and Asn-259. Positions 238 and 259 each coordinate dTMP. The GMP site is built by Thr-238 and Asn-259. Thr-238 is subject to Phosphothreonine. Asn-267 is a glycosylation site (N-linked (GlcNAc...) asparagine). GMP is bound by residues Leu-272, Lys-277, and Tyr-322. Positions 277 and 322 each coordinate AMP. Positions 277 and 322 each coordinate CMP. A dTMP-binding site is contributed by Tyr-322. The N-linked (GlcNAc...) asparagine glycan is linked to Asn-323. Residue Asp-358 participates in AMP binding. Positions 358, 362, 405, and 406 each coordinate Zn(2+). Asp-358 lines the CMP pocket. Asp-358 is a binding site for dTMP. Asp-358 is a GMP binding site. His-362 provides a ligand contact to 2',3'-cGAMP. His-406 is an AMP binding site. His-406 serves as a coordination point for CMP. DTMP is bound at residue His-406. His-406 contributes to the GMP binding site. Cystine bridges form between Cys-413–Cys-512, Cys-462–Cys-849, Cys-596–Cys-653, Cys-607–Cys-707, Cys-609–Cys-692, and Cys-819–Cys-829. Residue Asn-459 is glycosylated (N-linked (GlcNAc...) asparagine). A 2',3'-cGAMP-binding site is contributed by Ser-514. Position 517 (His-517) interacts with AMP. His-517 lines the Zn(2+) pocket. His-517 serves as a coordination point for CMP. His-517 provides a ligand contact to dTMP. His-517 provides a ligand contact to GMP. 2 N-linked (GlcNAc...) asparagine glycosylation sites follow: Asn-567 and Asn-624. The tract at residues 579–628 is linker; it reads KPIYNPSHPKEEGFLSQCPIKSTSNDLGCTCDPWIVPIKDFEKQLNLTTE. The segment at 635–906 is nuclease-like domain; the sequence is HMTVPYGRPR…THLPIFSQED (272 aa). Residues Asp-781, Asp-783, Asp-785, Arg-787, and Asp-789 each contribute to the Ca(2+) site.

It belongs to the nucleotide pyrophosphatase/phosphodiesterase family. Ectonucleotide pyrophosphatase/phosphodiesterase family member 1: Homodimer. Ectonucleotide pyrophosphatase/phosphodiesterase family member 1: Interacts with INSR; leading to inhibit INSR autophosphorylation and subsequent activation of INSR kinase activity. Ectonucleotide pyrophosphatase/phosphodiesterase family member 1, secreted form: Monomeric. Zn(2+) is required as a cofactor. Post-translationally, N-glycosylated. The secreted form is produced through cleavage at Lys-85 by intracellular processing. In terms of tissue distribution, selectively expressed on the surface of antibody-secreting cells. Expressed in osteocytes and osteoclasts.

Its subcellular location is the cell membrane. The protein resides in the basolateral cell membrane. It is found in the secreted. The catalysed reaction is Hydrolytically removes 5'-nucleotides successively from the 3'-hydroxy termini of 3'-hydroxy-terminated oligonucleotides.. The enzyme catalyses a ribonucleoside 5'-triphosphate + H2O = a ribonucleoside 5'-phosphate + diphosphate + H(+). It catalyses the reaction ATP + H2O = AMP + diphosphate + H(+). It carries out the reaction UTP + H2O = UMP + diphosphate + H(+). The catalysed reaction is GTP + H2O = GMP + diphosphate + H(+). The enzyme catalyses CTP + H2O = CMP + diphosphate + H(+). It catalyses the reaction 2',3'-cGAMP + 2 H2O = GMP + AMP + 2 H(+). It carries out the reaction P(1),P(4)-bis(5'-adenosyl) tetraphosphate + H2O = AMP + ATP + 2 H(+). The catalysed reaction is 3',5'-cyclic AMP + H2O = AMP + H(+). Its activity is regulated as follows. At low concentrations of ATP, a phosphorylated intermediate is formed which inhibits further hydrolysis. Its function is as follows. Nucleotide pyrophosphatase that generates diphosphate (PPi) and functions in bone mineralization and soft tissue calcification by regulating pyrophosphate levels. PPi inhibits bone mineralization and soft tissue calcification by binding to nascent hydroxyapatite crystals, thereby preventing further growth of these crystals. Preferentially hydrolyzes ATP, but can also hydrolyze other nucleoside 5' triphosphates such as GTP, CTP and UTP to their corresponding monophosphates with release of pyrophosphate, as well as diadenosine polyphosphates, and also 3',5'-cAMP to AMP. May also be involved in the regulation of the availability of nucleotide sugars in the endoplasmic reticulum and Golgi, and the regulation of purinergic signaling. Inhibits ectopic joint calcification and maintains articular chondrocytes by repressing hedgehog signaling; it is however unclear whether hedgehog inhibition is direct or indirect. Appears to modulate insulin sensitivity. Also involved in melanogenesis. Also able to hydrolyze 2',3'-cGAMP (cyclic GMP-AMP), a second messenger that activates TMEM173/STING and triggers type-I interferon production. 2',3'-cGAMP degradation takes place in the lumen or extracellular space, and not in the cytosol where it is produced; the role of 2',3'-cGAMP hydrolysis is therefore unclear. Not able to hydrolyze the 2',3'-cGAMP linkage isomer 3',3'-cGAMP. This Mus musculus (Mouse) protein is Ectonucleotide pyrophosphatase/phosphodiesterase family member 1.